The sequence spans 558 residues: Atlastin-1 (558 aa).

The tract at residues 1-28 (MAKSRRDRNSWGGFSEKSSDWSSEEEEP) is disordered. The segment at 1 to 34 (MAKSRRDRNSWGGFSEKSSDWSSEEEEPVRKAGP) is N-terminal hypervariable region (HVR). Residues 1 to 449 (MAKSRRDRNS…NIFHAARTPA (449 aa)) lie on the Cytoplasmic side of the membrane. A phosphoserine mark is found at Ser-10, Ser-22, and Ser-23. In terms of domain architecture, GB1/RHD3-type G spans 64–309 (DKEVVAVSVA…LIPWLLSPER (246 aa)). The GDP site is built by Arg-77, Lys-78, Gly-79, Lys-80, Ser-81, Phe-82, Gln-148, Arg-217, Asp-218, Val-276, and Asn-279. GTP-binding residues include Arg-77, Lys-78, Gly-79, Lys-80, Ser-81, and Phe-82. Ser-81 contributes to the Mg(2+) binding site. Residues Arg-217, Asp-218, and Val-276 each contribute to the GTP site. A 3HB (three-helix bundle) domain region spans residues 347 to 438 (MLQATAEANN…YIQYIKHNDS (92 aa)). Lys-395 bears the N6-acetyllysine mark. A coiled-coil region spans residues 412 to 439 (EFSRRYLQQLESEIDELYIQYIKHNDSK). A linker region spans residues 439 to 447 (KNIFHAART). The helical transmembrane segment at 450–470 (TLFVVIFITYVIAGVTGFIGL) threads the bilayer. A topological domain (lumenal) is located at residue Asp-471. A helical transmembrane segment spans residues 472 to 492 (IIASLCNMIMGLTLITLCTWA). The Cytoplasmic segment spans residues 493–558 (YIRYSGEYRE…PTQQPEKKKI (66 aa)). The interval 521 to 558 (NEALYKLYSAAATHRHLCHQAFPAPKSEPTQQPEKKKI) is autoinhibitory domain.

This sequence belongs to the TRAFAC class dynamin-like GTPase superfamily. GB1/RHD3 GTPase family. GB1 subfamily. As to quaternary structure, monomeric and homodimeric. The homodimer, transiently formed by two molecules on opposing membranes, is the active form mediating ER membrane fusion. Interacts with REEP1, REEP5, RTN3 and RTN4 (via the transmembrane region); these proteins are involved in endoplasmic reticulum tubular network organization. Interacts with ZFYVE27; both proteins are involved in endoplasmic reticulum tubular network organization. Interacts with ARL6IP1; both proteins are involved in endoplasmic reticulum tubular network organization. Interacts with SPAST; the interaction is direct, could recruit SPAST to Golgi membranes. Interacts (via N-terminal region) with MAP4K4 (via CNH regulatory domain). May interact with TMED2. Interacts with CPT1C. Phosphorylated. Phosphorylation, by different kinases, of the N-terminal hypervariable region (HVR) regulates the ATL1-mediated membrane tethering step.

The protein resides in the endoplasmic reticulum membrane. It localises to the golgi apparatus membrane. Its subcellular location is the cell projection. The protein localises to the axon. The enzyme catalyses GTP + H2O = GDP + phosphate + H(+). In terms of biological role, atlastin-1 (ATL1) is a membrane-anchored GTPase that mediates the GTP-dependent fusion of endoplasmic reticulum (ER) membranes, maintaining the continuous ER network. It facilitates the formation of three-way junctions where ER tubules intersect. Two atlastin-1 on neighboring ER tubules bind GTP and form loose homodimers through the GB1/RHD3-type G domains and 3HB regions. Upon GTP hydrolysis, the 3HB regions tighten, pulling the membranes together to drive their fusion. After fusion, the homodimer disassembles upon release of inorganic phosphate (Pi). Subsequently, GDP dissociates, resetting the monomers to a conformation ready for a new fusion cycle. May also regulate more or less directly Golgi biogenesis. Indirectly regulates axonal development. This Mus musculus (Mouse) protein is Atlastin-1.